The sequence spans 109 residues: Short-chain dehydrogenase/reductase homolog YusS (109 aa).

It belongs to the short-chain dehydrogenases/reductases (SDR) family.

In Bacillus subtilis (strain 168), this protein is Short-chain dehydrogenase/reductase homolog YusS (yusS).